Reading from the N-terminus, the 116-residue chain is CDKN2AIP N-terminal-like protein (116 aa).

Met1 carries the post-translational modification N-acetylmethionine. An XRN2-binding (XTBD) domain is found at 24–116 (AEQFRSYSES…RSELMKKHQS (93 aa)).

This sequence belongs to the CARF family. Interacts with XRN2; the interaction is direct.

The sequence is that of CDKN2AIP N-terminal-like protein (Cdkn2aipnl) from Rattus norvegicus (Rat).